Consider the following 211-residue polypeptide: LexA repressor (211 aa).

Residues 27-47 constitute a DNA-binding region (H-T-H motif); it reads QTEIARAFGFKGVRAVQHHLD. Residues Ser131 and Lys168 each act as for autocatalytic cleavage activity in the active site.

This sequence belongs to the peptidase S24 family. Homodimer.

It catalyses the reaction Hydrolysis of Ala-|-Gly bond in repressor LexA.. Its function is as follows. Represses a number of genes involved in the response to DNA damage (SOS response), including recA and lexA. In the presence of single-stranded DNA, RecA interacts with LexA causing an autocatalytic cleavage which disrupts the DNA-binding part of LexA, leading to derepression of the SOS regulon and eventually DNA repair. The chain is LexA repressor from Xylella fastidiosa (strain M12).